The following is a 409-amino-acid chain: Broad specificity amino-acid racemase (409 aa).

The first 23 residues, 1–23, serve as a signal peptide directing secretion; the sequence is MPFSRTLLALSLGMALLQNPAFA. An intrachain disulfide couples Cys-70 to Cys-96. Lys-74 (proton acceptor) is an active-site residue. Lys-74 is subject to N6-(pyridoxal phosphate)lysine. Arg-173 contributes to the substrate binding site. Catalysis depends on Tyr-300, which acts as the Proton acceptor. Position 348 (Met-348) interacts with substrate.

The protein belongs to the alanine racemase family. Bsr subfamily. As to quaternary structure, homodimer. It depends on pyridoxal 5'-phosphate as a cofactor.

The protein resides in the periplasm. It catalyses the reaction an L-alpha-amino acid = a D-alpha-amino acid. The catalysed reaction is L-lysine = D-lysine. It carries out the reaction L-arginine = D-arginine. The enzyme catalyses L-ornithine = D-ornithine. It catalyses the reaction L-alanine = D-alanine. The catalysed reaction is L-methionine = D-methionine. Its function is as follows. Amino-acid racemase able to utilize a broad range of substrates. Is mostly active with lysine and arginine and, to a lesser extent, with ornithine, whereas is about 10 times less active with alanine, methionine and ethionine. With phenylalanine as substrate only a trace activity is detectable, and is inactive with glutamate. Plays a key role in the catabolism of D-arginine and D-lysine, that allows P.taetrolens strain NBRC 3460 to grow on these basic D-amino acids as a sole carbon source. The chain is Broad specificity amino-acid racemase from Pseudomonas taetrolens.